A 240-amino-acid chain; its full sequence is Expansin-A20 (240 aa).

The signal sequence occupies residues 1-21 (MGNILLQLLAVVALCIAPARS). Residues 41–145 (GGACGYGNLY…QQVKCWRYGG (105 aa)) form the Expansin-like EG45 domain. N-linked (GlcNAc...) asparagine glycosylation is found at N107 and N207. The Expansin-like CBD domain maps to 155-234 (YFELVLVTNM…GWSFGQTFST (80 aa)).

Belongs to the expansin family. Expansin A subfamily.

The protein localises to the secreted. Its subcellular location is the cell wall. The protein resides in the membrane. In terms of biological role, may cause loosening and extension of plant cell walls by disrupting non-covalent bonding between cellulose microfibrils and matrix glucans. No enzymatic activity has been found. May be required for rapid internodal elongation in deepwater rice during submergence. The chain is Expansin-A20 (EXPA20) from Oryza sativa subsp. japonica (Rice).